Reading from the N-terminus, the 34-residue chain is Small, acid-soluble spore protein M (34 aa).

Residues 1-10 (MKTRPKKAGQ) show a composition bias toward basic residues. The tract at residues 1–34 (MKTRPKKAGQQKKTESKAIDSLDKKLGGPNRPST) is disordered. Over residues 12–26 (KKTESKAIDSLDKKL) the composition is skewed to basic and acidic residues.

The protein localises to the spore core. This Bacillus subtilis (strain 168) protein is Small, acid-soluble spore protein M (sspM).